Reading from the N-terminus, the 748-residue chain is 5-methyltetrahydropteroyltriglutamate--homocysteine methyltransferase (748 aa).

5-methyltetrahydropteroyltri-L-glutamate contacts are provided by residues 18–21 (REWK) and lysine 112. L-homocysteine is bound by residues 420–422 (IGS) and glutamate 473. L-methionine is bound by residues 420–422 (IGS) and glutamate 473. Tryptophan 550 is a binding site for 5-methyltetrahydropteroyltri-L-glutamate. Residue aspartate 588 coordinates L-homocysteine. An L-methionine-binding site is contributed by aspartate 588. A 5-methyltetrahydropteroyltri-L-glutamate-binding site is contributed by glutamate 594. Zn(2+)-binding residues include histidine 630, cysteine 632, and glutamate 654. The active-site Proton donor is histidine 683. Position 715 (cysteine 715) interacts with Zn(2+).

This sequence belongs to the vitamin-B12 independent methionine synthase family. It depends on Zn(2+) as a cofactor.

It catalyses the reaction 5-methyltetrahydropteroyltri-L-glutamate + L-homocysteine = tetrahydropteroyltri-L-glutamate + L-methionine. It functions in the pathway amino-acid biosynthesis; L-methionine biosynthesis via de novo pathway; L-methionine from L-homocysteine (MetE route): step 1/1. In terms of biological role, catalyzes the transfer of a methyl group from 5-methyltetrahydrofolate to homocysteine resulting in methionine formation. In Staphylococcus epidermidis (strain ATCC 35984 / DSM 28319 / BCRC 17069 / CCUG 31568 / BM 3577 / RP62A), this protein is 5-methyltetrahydropteroyltriglutamate--homocysteine methyltransferase.